The following is a 213-amino-acid chain: UPF0319 protein HAPS_0727 (213 aa).

A signal peptide spans 1–21 (MKLGKIALAMTALIAGTTAFA).

The protein belongs to the UPF0319 family.

The chain is UPF0319 protein HAPS_0727 from Glaesserella parasuis serovar 5 (strain SH0165) (Haemophilus parasuis).